Here is a 59-residue protein sequence, read N- to C-terminus: Large ribosomal subunit protein bL32 (59 aa).

Residues 1 to 59 (MAVQQNKKSPSKRGMHRSHDHLSAAPLAVEPTTGETHLRHHVSPNGYYRGRKVIKTKND) form a disordered region. Composition is skewed to basic residues over residues 9–19 (SPSKRGMHRSH) and 49–59 (RGRKVIKTKND).

This sequence belongs to the bacterial ribosomal protein bL32 family.

The sequence is that of Large ribosomal subunit protein bL32 from Cupriavidus necator (strain ATCC 17699 / DSM 428 / KCTC 22496 / NCIMB 10442 / H16 / Stanier 337) (Ralstonia eutropha).